Consider the following 122-residue polypeptide: MNKFIILALFAVAAASAMPNYPPPPPKPYHAPPPPPHHAHPPPPPPPPAHYGHHAHPAPAPVVHTYPVHAPHAKCGANLLVGCAPSVAHAPCVPLHGHGHGYPAPAPHYRAPESDSFDQFEE.

The signal sequence occupies residues Met1 to Ala17. Residues Tyr21–Ala49 are compositionally biased toward pro residues. Disordered regions lie at residues Tyr21–Val63 and Pro103–Glu122. One can recognise a VM domain in the interval His69–Tyr109.

This sequence belongs to the vitelline membrane protein family. As to expression, expressed in the middle and posterior regions of the follicle cells.

It localises to the secreted. The chain is Vitelline membrane protein 15a-3 from Aedes aegypti (Yellowfever mosquito).